We begin with the raw amino-acid sequence, 169 residues long: Small ribosomal subunit protein uS9 (169 aa).

2 disordered regions span residues 1–29 (MVEPTGIEDVQEYDENSEEYPAEYTTETP) and 128–169 (MDPE…YSKR). Acidic residues predominate over residues 9-21 (DVQEYDENSEEYP). Over residues 150–169 (VERKKAGLKKARKAPQYSKR) the composition is skewed to basic residues.

The protein belongs to the universal ribosomal protein uS9 family.

This Thermobifida fusca (strain YX) protein is Small ribosomal subunit protein uS9.